Consider the following 143-residue polypeptide: Large ribosomal subunit protein uL15 (143 aa).

Residues 1–47 (MKLHELTPSEGSRFSRRRIGRGDSSGQGKTSGRGQKGQKARGKVRVG) form a disordered region. The segment covering 23-35 (DSSGQGKTSGRGQ) has biased composition (gly residues).

This sequence belongs to the universal ribosomal protein uL15 family. In terms of assembly, part of the 50S ribosomal subunit.

Binds to the 23S rRNA. This chain is Large ribosomal subunit protein uL15, found in Lactiplantibacillus plantarum (strain ATCC BAA-793 / NCIMB 8826 / WCFS1) (Lactobacillus plantarum).